The sequence spans 278 residues: NH(3)-dependent NAD(+) synthetase (278 aa).

43 to 50 is a binding site for ATP; it reads GISGGVDS. Position 49 (Asp-49) interacts with Mg(2+). Arg-146 provides a ligand contact to deamido-NAD(+). Position 166 (Thr-166) interacts with ATP. Glu-171 contacts Mg(2+). Deamido-NAD(+) is bound by residues Lys-179 and Asp-186. The ATP site is built by Lys-195 and Thr-217. A deamido-NAD(+)-binding site is contributed by 266–267; that stretch reads HK.

This sequence belongs to the NAD synthetase family. In terms of assembly, homodimer.

The catalysed reaction is deamido-NAD(+) + NH4(+) + ATP = AMP + diphosphate + NAD(+) + H(+). It participates in cofactor biosynthesis; NAD(+) biosynthesis; NAD(+) from deamido-NAD(+) (ammonia route): step 1/1. Its function is as follows. Catalyzes the ATP-dependent amidation of deamido-NAD to form NAD. Uses ammonia as a nitrogen source. In Pseudoalteromonas translucida (strain TAC 125), this protein is NH(3)-dependent NAD(+) synthetase.